A 61-amino-acid chain; its full sequence is Sperm protamine P1 (61 aa).

Residues 1–61 (MARYRHSRSR…RYSRRRRRRY (61 aa)) are disordered.

The protein belongs to the protamine P1 family. Testis.

It is found in the nucleus. It localises to the chromosome. In terms of biological role, protamines substitute for histones in the chromatin of sperm during the haploid phase of spermatogenesis. They compact sperm DNA into a highly condensed, stable and inactive complex. The protein is Sperm protamine P1 (PRM1) of Onychogalea fraenata (Bridled nail-tailed wallaby).